We begin with the raw amino-acid sequence, 49 residues long: Large ribosomal subunit protein bL33A (49 aa).

It belongs to the bacterial ribosomal protein bL33 family.

This is Large ribosomal subunit protein bL33A from Bacillus pumilus (strain SAFR-032).